Reading from the N-terminus, the 1227-residue chain is DNA-directed RNA polymerase subunit beta (1227 aa).

The protein belongs to the RNA polymerase beta chain family. As to quaternary structure, the RNAP catalytic core consists of 2 alpha, 1 beta, 1 beta' and 1 omega subunit. When a sigma factor is associated with the core the holoenzyme is formed, which can initiate transcription.

The enzyme catalyses RNA(n) + a ribonucleoside 5'-triphosphate = RNA(n+1) + diphosphate. Its function is as follows. DNA-dependent RNA polymerase catalyzes the transcription of DNA into RNA using the four ribonucleoside triphosphates as substrates. This is DNA-directed RNA polymerase subunit beta from Chloroflexus aurantiacus (strain ATCC 29366 / DSM 635 / J-10-fl).